A 650-amino-acid polypeptide reads, in one-letter code: Acetyl-coenzyme A synthetase (650 aa).

CoA contacts are provided by residues 191–194 (RGGR), Thr-311, and Asn-335. Residues 387-389 (GEP), 411-416 (DTWWQT), Asp-500, and Arg-515 each bind ATP. Ser-523 serves as a coordination point for CoA. Position 526 (Arg-526) interacts with ATP. Mg(2+)-binding residues include Val-537, His-539, and Val-542. Arg-584 is a CoA binding site. Position 609 is an N6-acetyllysine (Lys-609).

The protein belongs to the ATP-dependent AMP-binding enzyme family. Requires Mg(2+) as cofactor. Post-translationally, acetylated. Deacetylation by the SIR2-homolog deacetylase activates the enzyme.

It catalyses the reaction acetate + ATP + CoA = acetyl-CoA + AMP + diphosphate. Catalyzes the conversion of acetate into acetyl-CoA (AcCoA), an essential intermediate at the junction of anabolic and catabolic pathways. AcsA undergoes a two-step reaction. In the first half reaction, AcsA combines acetate with ATP to form acetyl-adenylate (AcAMP) intermediate. In the second half reaction, it can then transfer the acetyl group from AcAMP to the sulfhydryl group of CoA, forming the product AcCoA. The sequence is that of Acetyl-coenzyme A synthetase from Shewanella sp. (strain MR-4).